The primary structure comprises 336 residues: MRYLPWLLLWAFLQVWGQSEAQQKNYTFRCLQMSSFANRSWSRTDSVVWLGDLQTHRWSNDSATISFTKPWSQGKLSNQQWEKLQHMFQVYRVSFTRDIQELVKMMSPKEDYPIEIQLSAGCEMYPGNASESFLHVAFQGKYVVRFWGTSWQTVPGAPSWLDLPIKVLNADQGTSATVQMLLNDTCPLFVRGLLEAGKSDLEKQEKPVAWLSSVPSSADGHRQLVCHVSGFYPKPVWVMWMRGDQEQQGTHRGDFLPNADETWYLQATLDVEAGEEAGLACRVKHSSLGGQDIILYWDARQAPVGLIVFIVLIMLVVVGAVVYYIWRRRSAYQDIR.

The signal sequence occupies residues Met-1–Ala-21. Residues Gln-22 to Gly-305 lie on the Extracellular side of the membrane. 3 N-linked (GlcNAc...) asparagine glycosylation sites follow: Asn-25, Asn-38, and Asn-60. Asp-98 serves as a coordination point for a D-galactosylceramide. 2 disulfides stabilise this stretch: Cys-122/Cys-186 and Cys-226/Cys-281. Residue Asn-128 is glycosylated (N-linked (GlcNAc...) asparagine). Asp-171–Thr-174 contributes to the a D-galactosylceramide binding site. An N-linked (GlcNAc...) asparagine glycan is attached at Asn-183. In terms of domain architecture, Ig-like spans Pro-207–Trp-297. Residues Leu-306–Trp-326 form a helical membrane-spanning segment. Topologically, residues Arg-327–Arg-336 are cytoplasmic. The Internalization signal signature appears at Tyr-332–Ile-335.

As to quaternary structure, heterodimer with B2M (beta-2-microglobulin). Interacts with MHC II and CD74. N-glycosylated. As to expression, expressed on cortical thymocytes, on certain T-cell leukemias, and in various other tissues.

Its subcellular location is the cell membrane. The protein localises to the endosome membrane. It is found in the lysosome membrane. Antigen-presenting protein that binds self and non-self glycolipids and presents them to T-cell receptors on natural killer T-cells. The sequence is that of Antigen-presenting glycoprotein CD1d1 (Cd1d1) from Mus musculus (Mouse).